We begin with the raw amino-acid sequence, 110 residues long: MVLMNKKAIMKLALMLFLLGFTANVVDARFDSTSFITQVLSNGDDVKSACCDTCLCTRSQPPTCRCVDVRESCHSACDKCVCAYSNPPQCQCYDTHKFCYKACHNSEIEE.

The N-terminal stretch at methionine 1–alanine 28 is a signal peptide. The propeptide occupies arginine 29–asparagine 42. Cystine bridges form between cysteine 50–cysteine 103, cysteine 51–cysteine 66, cysteine 54–cysteine 99, cysteine 56–cysteine 64, cysteine 73–cysteine 80, cysteine 77–cysteine 92, and cysteine 82–cysteine 90.

Monomer.

Functionally, inhibitor of trypsin and of chymotrypsin. This chain is Bowman-Birk type proteinase inhibitor, found in Lens culinaris (Lentil).